The chain runs to 311 residues: 2-methoxy-6-polyprenyl-1,4-benzoquinol methylase, mitochondrial (311 aa).

Residues 1–29 constitute a mitochondrion transit peptide; that stretch reads MAAGLCPGRALLSRRGGALWALLGTARGR. S-adenosyl-L-methionine contacts are provided by residues Thr100, Asp155, and 183-184; that span reads NA.

Belongs to the class I-like SAM-binding methyltransferase superfamily. MenG/UbiE family. As to quaternary structure, component of a multi-subunit COQ enzyme complex, composed of at least COQ3, COQ4, COQ5, COQ6, COQ7 and COQ9.

The protein resides in the mitochondrion inner membrane. It carries out the reaction a 2-methoxy-6-(all-trans-polyprenyl)benzene-1,4-diol + S-adenosyl-L-methionine = a 5-methoxy-2-methyl-3-(all-trans-polyprenyl)benzene-1,4-diol + S-adenosyl-L-homocysteine + H(+). The protein operates within cofactor biosynthesis; ubiquinone biosynthesis. In terms of biological role, methyltransferase required for the conversion of 2-polyprenyl-6-methoxy-1,4-benzoquinol (DDMQH2) to 2-polyprenyl-3-methyl-6-methoxy-1,4-benzoquinol (DMQH2). This Gallus gallus (Chicken) protein is 2-methoxy-6-polyprenyl-1,4-benzoquinol methylase, mitochondrial.